The chain runs to 273 residues: Undecaprenyl-diphosphatase (273 aa).

The next 7 membrane-spanning stretches (helical) occupy residues 4-24 (FLLL…FLPI), 43-63 (KGKV…CWEY), 83-103 (FVLN…LFIK), 109-129 (LFHP…ILWA), 184-204 (ATEF…FYDL), 218-238 (VFAI…RGLL), and 248-268 (VFAW…YSGM).

It belongs to the UppP family.

Its subcellular location is the cell inner membrane. The enzyme catalyses di-trans,octa-cis-undecaprenyl diphosphate + H2O = di-trans,octa-cis-undecaprenyl phosphate + phosphate + H(+). In terms of biological role, catalyzes the dephosphorylation of undecaprenyl diphosphate (UPP). Confers resistance to bacitracin. The polypeptide is Undecaprenyl-diphosphatase (Nitrosospira multiformis (strain ATCC 25196 / NCIMB 11849 / C 71)).